A 335-amino-acid chain; its full sequence is MGPLSAPPCTEHIKWKGLLVTASLLNFWNLPTTAQVTIEAQPPKVSEGKDVLLLVHNLPQNLTGYIWYKGQIRDLYHYITSYVVDGQIIIYGPAYSGRETAYSNASLLIQNVTREDAGSYTLHIIKRGDGTRGVTGYFTFTLYLETPKPSISSSNLNPREAMETVILTCDPETPDTSYQWWMNGQSLPMTHRFQLSETNRTLFLFGVTKYTAGPYECEIRNSGSASRSDPVTLNLLHGPDLPRIHPSYTNYRSGDNLYLSCFANSNPPAQYSWTINGKFQQSGQNLFIPQITTKHSGLYVCSVRNSATGEESSTSLTVKVSASTRIGLLPLLNPT.

The signal sequence occupies residues 1 to 34 (MGPLSAPPCTEHIKWKGLLVTASLLNFWNLPTTA). The region spanning 35 to 144 (QVTIEAQPPK…TGYFTFTLYL (110 aa)) is the Ig-like V-type domain. N-linked (GlcNAc...) asparagine glycosylation is found at asparagine 61, asparagine 104, asparagine 111, and asparagine 199. 2 Ig-like C2-type domains span residues 147–234 (PKPS…VTLN) and 239–317 (PDLP…TSLT). Disulfide bonds link cysteine 169–cysteine 217 and cysteine 261–cysteine 301.

This sequence belongs to the immunoglobulin superfamily. CEA family.

It is found in the secreted. This chain is Pregnancy-specific beta-1-glycoprotein 2 (PSG2), found in Homo sapiens (Human).